Reading from the N-terminus, the 114-residue chain is Transmembrane protein 14B (114 aa).

4 consecutive transmembrane segments (helical) span residues 8-28, 34-54, 60-80, and 83-103; these read LVPL…GGIV, GSVP…LGAY, PRNV…VMGM, and YYYG…LMAA.

It belongs to the TMEM14 family. Interacts with IQGAP1; this interaction promotes phosphorylation and nuclear translocation of IQGAP1. In terms of tissue distribution, mainly expressed in the outer subventricular zone (OSVZ) of the fetal brains.

The protein resides in the membrane. Functionally, primate-specific protein involved in cortical expansion and folding in the developing neocortex. May drive neural progenitor proliferation through nuclear translocation of IQGAP1, which in turn promotes G1/S cell cycle transitions. This Homo sapiens (Human) protein is Transmembrane protein 14B (TMEM14B).